Here is a 239-residue protein sequence, read N- to C-terminus: Ribonuclease HII (239 aa).

The 192-residue stretch at 30–221 (GPVAGVDEVG…VRRVANGSGG (192 aa)) folds into the RNase H type-2 domain. Positions 36, 37, and 130 each coordinate a divalent metal cation.

The protein belongs to the RNase HII family. Mn(2+) is required as a cofactor. Mg(2+) serves as cofactor.

The protein localises to the cytoplasm. The catalysed reaction is Endonucleolytic cleavage to 5'-phosphomonoester.. Endonuclease that specifically degrades the RNA of RNA-DNA hybrids. The polypeptide is Ribonuclease HII (Mycolicibacterium paratuberculosis (strain ATCC BAA-968 / K-10) (Mycobacterium paratuberculosis)).